Reading from the N-terminus, the 59-residue chain is U-actitoxin-Aer2a (59 aa).

In terms of processing, contains 5 disulfide bonds.

The protein resides in the secreted. Its subcellular location is the nematocyst. This is U-actitoxin-Aer2a from Anemonia erythraea (Sea anemone).